Consider the following 391-residue polypeptide: Phosphoglycerate kinase (391 aa).

Substrate-binding positions include 21 to 23, arginine 36, 59 to 62, arginine 113, and arginine 146; these read DLN and HLGR. ATP is bound by residues lysine 197, glutamate 319, and 345 to 348; that span reads GGDT.

It belongs to the phosphoglycerate kinase family. Monomer.

It localises to the cytoplasm. The enzyme catalyses (2R)-3-phosphoglycerate + ATP = (2R)-3-phospho-glyceroyl phosphate + ADP. Its pathway is carbohydrate degradation; glycolysis; pyruvate from D-glyceraldehyde 3-phosphate: step 2/5. This Shewanella sp. (strain MR-7) protein is Phosphoglycerate kinase.